A 420-amino-acid chain; its full sequence is Gamma-glutamyl phosphate reductase (420 aa).

This sequence belongs to the gamma-glutamyl phosphate reductase family.

The protein resides in the cytoplasm. It carries out the reaction L-glutamate 5-semialdehyde + phosphate + NADP(+) = L-glutamyl 5-phosphate + NADPH + H(+). It participates in amino-acid biosynthesis; L-proline biosynthesis; L-glutamate 5-semialdehyde from L-glutamate: step 2/2. In terms of biological role, catalyzes the NADPH-dependent reduction of L-glutamate 5-phosphate into L-glutamate 5-semialdehyde and phosphate. The product spontaneously undergoes cyclization to form 1-pyrroline-5-carboxylate. This chain is Gamma-glutamyl phosphate reductase, found in Neisseria meningitidis serogroup B (strain ATCC BAA-335 / MC58).